The primary structure comprises 49 residues: Large ribosomal subunit protein bL33 (49 aa).

This sequence belongs to the bacterial ribosomal protein bL33 family.

In Nitratidesulfovibrio vulgaris (strain ATCC 29579 / DSM 644 / CCUG 34227 / NCIMB 8303 / VKM B-1760 / Hildenborough) (Desulfovibrio vulgaris), this protein is Large ribosomal subunit protein bL33.